A 456-amino-acid polypeptide reads, in one-letter code: RuvB-like 1 (456 aa).

A Glycyl lysine isopeptide (Lys-Gly) (interchain with G-Cter in SUMO2) cross-link involves residue Lys-2. Residue 70–77 (GPPGTGKT) coordinates ATP. Lys-225 participates in a covalent cross-link: Glycyl lysine isopeptide (Lys-Gly) (interchain with G-Cter in SUMO1); alternate. Lys-225 participates in a covalent cross-link: Glycyl lysine isopeptide (Lys-Gly) (interchain with G-Cter in SUMO2); alternate. Lys-445 participates in a covalent cross-link: Glycyl lysine isopeptide (Lys-Gly) (interchain with G-Cter in SUMO2). Lys-453 is modified (N6-acetyllysine).

Belongs to the RuvB family. As to quaternary structure, forms homohexameric rings. Can form a dodecamer with RUVBL2 made of two stacked hexameric rings; however, even though RUVBL1 and RUVBL2 are present in equimolar ratio, the oligomeric status of each hexamer is not known. Oligomerization may regulate binding to nucleic acids and conversely, binding to nucleic acids may affect the dodecameric assembly. Interaction of the complex with DHX34 results in conformational changes of the N-terminus of the RUVBL2 subunits, resulting in loss of nucleotide binding ability and ATP hydrolysis of the complex. Interacts with the transcriptional activation domain of MYC. Component of the RNA polymerase II holoenzyme complex. May also act to bridge the LEF1/TCF1-CTNNB1 complex and TBP. Component of the NuA4 histone acetyltransferase complex which contains the catalytic subunit KAT5/TIP60 and the subunits EP400, TRRAP/PAF400, BRD8/SMAP, EPC1, DMAP1/DNMAP1, RUVBL1/TIP49, RUVBL2, ING3, actin, ACTL6A/BAF53A, MORF4L1/MRG15, MORF4L2/MRGX, MRGBP, YEATS4/GAS41, VPS72/YL1 and MEAF6. The NuA4 complex interacts with MYC and the adenovirus E1A protein. RUVBL1 interacts with EP400. Component of a NuA4-related complex which contains EP400, TRRAP/PAF400, SRCAP, BRD8/SMAP, EPC1, DMAP1/DNMAP1, RUVBL1/TIP49, RUVBL2, actin, ACTL6A/BAF53A, VPS72 and YEATS4/GAS41. Component of the BAF53 complex, at least composed of ACTL6A/BAF53A, RUVBL1/TIP49, SMARCA2/BRM, and TRRAP/PAF400. Component of some MLL1/MLL complex, at least composed of the core components KMT2A/MLL1, ASH2L, HCFC1/HCF1, WDR5 and RBBP5, as well as the facultative components BACC1, CHD8, E2F6, HSP70, INO80C, KANSL1, LAS1L, MAX, MCRS1, MGA, MYST1/MOF, PELP1, PHF20, PRP31, RING2, RUVB1/TIP49A, RUVB2/TIP49B, SENP3, TAF1, TAF4, TAF6, TAF7, TAF9 and TEX10. Associates with alpha and gamma tubulins, particularly during metaphase and early anaphase. Interacts with NPAT. Component of the chromatin-remodeling INO80 complex; specifically part of a complex module associated with the helicase ATP-binding and the helicase C-terminal domain of INO80. Interacts with IGHMBP2. Interacts with OFD1. Interacts with HINT1. Component of a complex with USP49 and PSMC5. Component of a SWR1-like complex. Component of the R2TP complex composed at least of RUVBL1, RUVBL2, RPAP3 and PIHD1. Component of the PAQosome complex which is responsible for the biogenesis of several protein complexes and which consists of R2TP complex members RUVBL1, RUVBL2, RPAP3 and PIH1D1, URI complex members PFDN2, PFDN6, PDRG1, UXT and URI1 as well as ASDURF, POLR2E and DNAAF10/WDR92. Interacts with PIH1D1. Interacts with ITFG1. Interacts with WAC; WAC positively regulates MTOR activity by promoting the assembly of the TTT complex composed of TELO2, TTI1 and TTI2 and the RUVBL complex composed of RUVBL1 and RUVBL2 into the TTT-RUVBL complex which leads to the dimerization of the mTORC1 complex and its subsequent activation. The RUVBL1/RUVBL2 complex interacts with ZNHIT1 (via HIT-type zinc finger), ZNHIT3 (via HIT-type zinc finger), ZNHIT6 (via HIT-type zinc finger) and DDX59/ZNHIT5 (via HIT-type zinc finger) in the presence of ADP. Interacts with NOPCHAP1; the interaction is direct and disrupted upon ATP binding. Interacts with SMG1. Interacts with NOP2, NOP56 and NUFIP1.

Its subcellular location is the nucleus matrix. The protein resides in the nucleus. It is found in the nucleoplasm. The protein localises to the cytoplasm. It localises to the membrane. Its subcellular location is the cytoskeleton. The protein resides in the microtubule organizing center. It is found in the centrosome. The protein localises to the dynein axonemal particle. It carries out the reaction ATP + H2O = ADP + phosphate + H(+). Functionally, possesses single-stranded DNA-stimulated ATPase and ATP-dependent DNA helicase (3' to 5') activity; hexamerization is thought to be critical for ATP hydrolysis and adjacent subunits in the ring-like structure contribute to the ATPase activity. Component of the NuA4 histone acetyltransferase complex which is involved in transcriptional activation of select genes principally by acetylation of nucleosomal histones H4 and H2A. This modification may both alter nucleosome-DNA interactions and promote interaction of the modified histones with other proteins which positively regulate transcription. This complex may be required for the activation of transcriptional programs associated with oncogene and proto-oncogene mediated growth induction, tumor suppressor mediated growth arrest and replicative senescence, apoptosis, and DNA repair. The NuA4 complex ATPase and helicase activities seem to be, at least in part, contributed by the association of RUVBL1 and RUVBL2 with EP400. NuA4 may also play a direct role in DNA repair when recruited to sites of DNA damage. Component of a SWR1-like complex that specifically mediates the removal of histone H2A.Z/H2AZ1 from the nucleosome. Proposed core component of the chromatin remodeling INO80 complex which exhibits DNA- and nucleosome-activated ATPase activity and catalyzes ATP-dependent nucleosome sliding. Plays an essential role in oncogenic transformation by MYC and also modulates transcriptional activation by the LEF1/TCF1-CTNNB1 complex. Essential for cell proliferation. May be able to bind plasminogen at cell surface and enhance plasminogen activation. This is RuvB-like 1 (Ruvbl1) from Mus musculus (Mouse).